Here is a 472-residue protein sequence, read N- to C-terminus: WAS protein family homolog DDB_G0292878 (472 aa).

A disordered region spans residues L279–E472. The segment covering Y282–D299 has biased composition (polar residues). The span at N300 to S314 shows a compositional bias: low complexity. The segment covering P320 to P356 has biased composition (pro residues). Residues N363 to N373 show a composition bias toward acidic residues. Residues G374–I383 are compositionally biased toward gly residues. Residues A382 to A401 form the WH2 domain. Positions T457–E472 are enriched in acidic residues.

The protein belongs to the WASH1 family.

Acts as a nucleation-promoting factor by activating the Arp2/3 complex to induce actin polymerization. This Dictyostelium discoideum (Social amoeba) protein is WAS protein family homolog DDB_G0292878.